Here is a 353-residue protein sequence, read N- to C-terminus: UPF0283 membrane protein YcjF (353 aa).

A run of 3 helical transmembrane segments spans residues 70-90, 100-120, and 213-233; these read MVMG…VQWT, VALG…GSVV, and ESTL…FIAW.

The protein belongs to the UPF0283 family.

It is found in the cell inner membrane. The chain is UPF0283 membrane protein YcjF from Shigella boydii serotype 4 (strain Sb227).